Consider the following 141-residue polypeptide: Hemoglobin subunit alpha-D (141 aa).

One can recognise a Globin domain in the interval methionine 1 to arginine 141. Positions 58 and 87 each coordinate heme b.

It belongs to the globin family. Heterotetramer of two alpha-D chains and two beta chains. In terms of tissue distribution, red blood cells.

Involved in oxygen transport from the lung to the various peripheral tissues. The chain is Hemoglobin subunit alpha-D (HBAD) from Coturnix japonica (Japanese quail).